The following is a 429-amino-acid chain: Enolase (429 aa).

Position 162 (Q162) interacts with (2R)-2-phosphoglycerate. Catalysis depends on E204, which acts as the Proton donor. The Mg(2+) site is built by D241, E286, and D313. (2R)-2-phosphoglycerate contacts are provided by K338, R367, S368, and K389. The active-site Proton acceptor is the K338.

The protein belongs to the enolase family. Requires Mg(2+) as cofactor.

It is found in the cytoplasm. Its subcellular location is the secreted. It localises to the cell surface. The catalysed reaction is (2R)-2-phosphoglycerate = phosphoenolpyruvate + H2O. Its pathway is carbohydrate degradation; glycolysis; pyruvate from D-glyceraldehyde 3-phosphate: step 4/5. Catalyzes the reversible conversion of 2-phosphoglycerate (2-PG) into phosphoenolpyruvate (PEP). It is essential for the degradation of carbohydrates via glycolysis. This Shouchella clausii (strain KSM-K16) (Alkalihalobacillus clausii) protein is Enolase.